Here is a 226-residue protein sequence, read N- to C-terminus: Large ribosomal subunit protein uL3 (226 aa).

Residues 136–162 (NFGSQRASHGNSRSHNVPGSISMAQDP) form a disordered region. Over residues 137 to 158 (FGSQRASHGNSRSHNVPGSISM) the composition is skewed to polar residues. Position 160 is an N5-methylglutamine (Q160).

This sequence belongs to the universal ribosomal protein uL3 family. As to quaternary structure, part of the 50S ribosomal subunit. Forms a cluster with proteins L14 and L19. Post-translationally, methylated by PrmB.

In terms of biological role, one of the primary rRNA binding proteins, it binds directly near the 3'-end of the 23S rRNA, where it nucleates assembly of the 50S subunit. The polypeptide is Large ribosomal subunit protein uL3 (Methylibium petroleiphilum (strain ATCC BAA-1232 / LMG 22953 / PM1)).